The primary structure comprises 146 residues: ATP synthase epsilon chain (146 aa).

Over residues 92 to 116 (ISVDQARRDRDSLRKKLNEHERSEQ) the composition is skewed to basic and acidic residues. The segment at 92–120 (ISVDQARRDRDSLRKKLNEHERSEQDPEV) is disordered.

The protein belongs to the ATPase epsilon chain family. F-type ATPases have 2 components, CF(1) - the catalytic core - and CF(0) - the membrane proton channel. CF(1) has five subunits: alpha(3), beta(3), gamma(1), delta(1), epsilon(1). CF(0) has three main subunits: a, b and c.

The protein localises to the cell membrane. Its function is as follows. Produces ATP from ADP in the presence of a proton gradient across the membrane. The polypeptide is ATP synthase epsilon chain (Cutibacterium acnes (strain DSM 16379 / KPA171202) (Propionibacterium acnes)).